A 673-amino-acid chain; its full sequence is Xyloglucan glycosyltransferase 4 (673 aa).

Helical transmembrane passes span 90–110 (FIKA…VAHF) and 144–164 (IAPL…IQSL). Asp238 is a catalytic residue. The substrate site is built by Asp297 and Asp299. Asp391 is a catalytic residue. 2 consecutive transmembrane segments (helical) span residues 469 to 489 (LILP…TMFI) and 494 to 514 (LPLW…ILPS). Phosphoserine is present on Ser581. Transmembrane regions (helical) follow at residues 623–643 (VFKK…RSFL) and 648–668 (LHFY…LDLI).

Belongs to the glycosyltransferase 2 family. Plant cellulose synthase-like C subfamily. As to quaternary structure, homodimer. Interacts with XXT5. Interacts with FUT1, MUR3 and XLT2. As to expression, expressed in seedlings, roots, leaves, stems, flowers and seeds.

It localises to the golgi apparatus membrane. Beta-1,4-glucan synthase rather involved in the synthesis of the xyloglucan backbone than cellulose. Seems to work simultaneously with xyloglucan 6-xylosyltransferase. Xyloglucan is a noncellulosic polysaccharides of plant cell wall and consists of a glucan backbone substituted by xylose, galactose and fucose. Associates with other xyloglucan-synthesizing enzymes to form multiprotein complexes for xyloglucan synthesis in the Golgi. The protein is Xyloglucan glycosyltransferase 4 of Arabidopsis thaliana (Mouse-ear cress).